A 795-amino-acid chain; its full sequence is Lon protease (795 aa).

The 193-residue stretch at 11 to 203 (GRVIPVSDIV…KFIDYLLKQK (193 aa)) folds into the Lon N-terminal domain. 356–363 (GPPGVGKT) contributes to the ATP binding site. A Lon proteolytic domain is found at 593 to 771 (DNVPGVVTGL…EDVLRETLGI (179 aa)). Active-site residues include serine 677 and lysine 720.

Belongs to the peptidase S16 family. Homohexamer. Organized in a ring with a central cavity.

The protein resides in the cytoplasm. The catalysed reaction is Hydrolysis of proteins in presence of ATP.. In terms of biological role, ATP-dependent serine protease that mediates the selective degradation of mutant and abnormal proteins as well as certain short-lived regulatory proteins. Required for cellular homeostasis and for survival from DNA damage and developmental changes induced by stress. Degrades polypeptides processively to yield small peptide fragments that are 5 to 10 amino acids long. Binds to DNA in a double-stranded, site-specific manner. This Clostridium beijerinckii (strain ATCC 51743 / NCIMB 8052) (Clostridium acetobutylicum) protein is Lon protease.